Consider the following 179-residue polypeptide: Transcription factor 21 (179 aa).

Positions 19-88 (DCDSLKVDSN…VQRNAANARE (70 aa)) are disordered. Composition is skewed to polar residues over residues 30–49 (EFGT…NGSP) and 70–80 (SGVSQEGKQVQ). The 53-residue stretch at 79–131 (VQRNAANARERARMRVLSKAFSRLKTTLPWVPPDTKLSKLDTLRLASSYIAHL) folds into the bHLH domain.

Efficient DNA binding requires dimerization with another bHLH protein. Forms a heterodimer with TCF3 and binds the E box (5'-CANNTG-3'). As to expression, expressed at high levels in lung, kidney, gut, heart, ovary and podocytes (visceral glomerular epithelial cells). Also found in spleen, large intestine, uterus, bladder and testis.

The protein resides in the nucleus. Functionally, involved in epithelial-mesenchymal interactions in kidney and lung morphogenesis that include epithelial differentiation and branching morphogenesis. May be involved in the organogenesis of the spleen and heart and in cardiac and coronary artery development. May function in the development and sex differentiation of gonad via transcriptional regulation of AD4BP/SF-1. This chain is Transcription factor 21 (Tcf21), found in Mus musculus (Mouse).